We begin with the raw amino-acid sequence, 392 residues long: Protein O-glucosyltransferase 1 (392 aa).

The first 23 residues, 1-23 (MELGVSSQLWLWLLLLLLPPVPG), serve as a signal peptide directing secretion. Disulfide bonds link Cys-49-Cys-56, Cys-54-Cys-357, Cys-102-Cys-108, and Cys-263-Cys-286. Residue Asn-53 is glycosylated (N-linked (GlcNAc...) asparagine). The tract at residues 103-107 (MFPSR) is interaction with the consensus sequence C-X-S-X-[PA]-C in peptide substrates. Residue Asp-133 is the Proton donor/acceptor of the active site. An interaction with the consensus sequence C-X-S-X-[PA]-C in peptide substrates region spans residues 172–178 (AVWPIYP). Tyr-177 is a binding site for UDP-alpha-D-glucose. Asn-204 carries N-linked (GlcNAc...) asparagine glycosylation. Residues Ser-212, Arg-218, and 274-279 (VAASFR) contribute to the UDP-alpha-D-glucose site. Asn-373 carries N-linked (GlcNAc...) asparagine glycosylation. A Prevents secretion from ER motif is present at residues 389–392 (KIEL).

This sequence belongs to the glycosyltransferase 90 family.

It is found in the endoplasmic reticulum lumen. The catalysed reaction is L-seryl-[EGF-like domain protein] + UDP-alpha-D-xylose = 3-O-(beta-D-xylosyl)-L-seryl-[EGF-like domain protein] + UDP + H(+). It carries out the reaction L-seryl-[EGF-like domain protein] + UDP-alpha-D-glucose = 3-O-(beta-D-glucosyl)-L-seryl-[EGF-like domain protein] + UDP + H(+). It functions in the pathway protein modification; protein glycosylation. In terms of biological role, dual specificity glycosyltransferase that catalyzes the transfer of glucose and xylose from UDP-glucose and UDP-xylose, respectively, to a serine residue found in the consensus sequence of C-X-S-X-P-C. Specifically targets extracellular EGF repeats of protein such as CRB2, F7, F9 and NOTCH2. Acts as a positive regulator of Notch signaling by mediating O-glucosylation of Notch, leading to regulate muscle development. Notch glucosylation does not affect Notch ligand binding. Required during early development to promote gastrulation: acts by mediating O-glucosylation of CRB2, which is required for CRB2 localization to the cell membrane. The protein is Protein O-glucosyltransferase 1 (POGLUT1) of Bos taurus (Bovine).